Here is a 66-residue protein sequence, read N- to C-terminus: VVIVAVLLLTACQLITANDSRGTQKHRALRSDTKLSMSTRCKGKGASCRRTSYDCCTGSCRSGRCG.

A signal peptide spans 1-17; the sequence is VVIVAVLLLTACQLITA. A propeptide spanning residues 18–40 is cleaved from the precursor; it reads NDSRGTQKHRALRSDTKLSMSTR. Cystine bridges form between cysteine 41/cysteine 56, cysteine 48/cysteine 60, and cysteine 55/cysteine 65. Cysteine 65 carries the post-translational modification Cysteine amide.

It belongs to the conotoxin O1 superfamily. As to expression, expressed by the venom duct.

The protein localises to the secreted. Its function is as follows. Omega-conotoxins act at presynaptic membranes, they bind and block voltage-gated calcium channels. This toxin blocks N-type calcium channels (Cav2.2/CACNA1B). It shows a higher potency when Cav2.2/CACNA1B is only expressed with the ancillary subunit CACNB3 (IC(50)=0.12 nM) than on Cav2.2/CACNA1B expressed with the ancillary subunits CACNA2D1 and CACNB3 (IC(50)=2.6 nM). The Cav2.2/CACNA1B block by this toxin is voltage-independent, whereas the recovery from toxin block is voltage-dependent. There is a low recovery at physiological membrane potential and a high recovery with hyperpolarized potential. This indicates that the toxin has a higher affinity for Cav2.2/CACNA1B in the inactivated state. It is noteworthy that ancillary subunits beta modulate recovery from this toxin block. Cav2.2/CACNA1B expressed with the ancillary subunit CACNB2a (isoform 2a) almost recover completely from this toxin block, whereas Cav2.2/CACNA1B expressed with CACNB3 exhibits relatively weak recovery. Inhibition by this toxin of excitatory synaptic transmission is reversible. In vivo, when tested on rat model of persistent pain, this toxin blocks chronic pain behavior. The chain is Omega conotoxin-CVIE from Conus catus (Cat cone).